An 811-amino-acid chain; its full sequence is Lon protease 1 (811 aa).

A Lon N-terminal domain is found at 15–212; the sequence is LPVLSLRDTV…SLALHLYRQI (198 aa). ATP is bound at residue 376-383; that stretch reads GPPGTGKT. In terms of domain architecture, Lon proteolytic spans 613–794; it reads YDQPGVATGM…DEALARCLRL (182 aa). Catalysis depends on residues Ser-700 and Lys-743.

The protein belongs to the peptidase S16 family. Homohexamer. Organized in a ring with a central cavity.

The protein localises to the cytoplasm. The catalysed reaction is Hydrolysis of proteins in presence of ATP.. In terms of biological role, ATP-dependent serine protease that mediates the selective degradation of mutant and abnormal proteins as well as certain short-lived regulatory proteins. Required for cellular homeostasis and for survival from DNA damage and developmental changes induced by stress. Degrades polypeptides processively to yield small peptide fragments that are 5 to 10 amino acids long. Binds to DNA in a double-stranded, site-specific manner. The polypeptide is Lon protease 1 (Sorangium cellulosum (strain So ce56) (Polyangium cellulosum (strain So ce56))).